The sequence spans 601 residues: Deuterosome assembly protein 1 (601 aa).

3 coiled-coil regions span residues 14–59, 86–197, and 226–278; these read CEAE…NAQT, TQNY…KQQR, and IEKL…LQSR. Disordered stretches follow at residues 115 to 135 and 188 to 213; these read MKQN…PFEL and QTQL…CESS. The span at 121 to 131 shows a compositional bias: basic and acidic residues; that stretch reads HRKEASNKDET. Positions 307 to 326 are disordered; that stretch reads DNRKRVESSYSPSTKEPERK. Residues 340-397 are a coiled coil; the sequence is HEKELNKMRSQLYQEEDLCSEQERMRNEISELTQELHQKEVTIATIMKKAALLERQLK. Ser-544 is subject to Phosphoserine. Residues 555–586 are a coiled coil; it reads AAQHFLMEEEKRAKELEKLLNTHIDELQRHTE.

This sequence belongs to the CEP63 family. As to quaternary structure, interacts with CEP152; the interaction is mutually exclusive with CEP63.

Its subcellular location is the cytoplasm. Functionally, key structural component of the deuterosome, a structure that promotes de novo centriole amplification in multiciliated cells. Deuterosome-mediated centriole amplification occurs in terminally differentiated multiciliated cells and can generate more than 100 centrioles. Probably sufficient for the specification and formation of the deuterosome inner core. Interacts with CEP152 and recruits PLK4 to activate centriole biogenesis. The protein is Deuterosome assembly protein 1 of Rattus norvegicus (Rat).